The chain runs to 111 residues: Phosphoribosyl-ATP pyrophosphatase (111 aa).

The protein belongs to the PRA-PH family.

It localises to the cytoplasm. It catalyses the reaction 1-(5-phospho-beta-D-ribosyl)-ATP + H2O = 1-(5-phospho-beta-D-ribosyl)-5'-AMP + diphosphate + H(+). Its pathway is amino-acid biosynthesis; L-histidine biosynthesis; L-histidine from 5-phospho-alpha-D-ribose 1-diphosphate: step 2/9. The chain is Phosphoribosyl-ATP pyrophosphatase from Pseudomonas entomophila (strain L48).